We begin with the raw amino-acid sequence, 158 residues long: Serglycin (158 aa).

An N-terminal signal peptide occupies residues 1–27 (MMQKLLKCSRLVLALALILVLESSVQG). Residues Cys-40 and Cys-49 are joined by a disulfide bond. Ser-94 and Ser-96 each carry an O-linked (Xyl...) (glycosaminoglycan) serine glycan. 9 tandem repeats follow at residues 94 to 95 (SG), 96 to 97 (SG), 98 to 99 (FG), 100 to 101 (SG), 102 to 103 (SG), 104 to 105 (SG), 106 to 107 (SG), 108 to 109 (SG), and 110 to 111 (SG). The interval 94-111 (SGSGFGSGSGSGSGSGSG) is 9 X 2 AA tandem repeats of [SF]-G. 6 O-linked (Xyl...) (glycosaminoglycan) serine glycosylation sites follow: Ser-100, Ser-102, Ser-104, Ser-106, Ser-108, and Ser-110. The interval 134–158 (RSLDRNLPSDSQDLGQHGLEEDFML) is disordered.

The protein belongs to the serglycin family. In terms of assembly, binds to activated CD44 and to GZMB. Post-translationally, O-glycosylated; contains chondroitin sulfate and heparan sulfate.

Its subcellular location is the cytoplasmic granule. The protein resides in the cytolytic granule. The protein localises to the secreted. It localises to the extracellular space. It is found in the golgi apparatus. Its function is as follows. Plays a role in formation of mast cell secretory granules and mediates storage of various compounds in secretory vesicles. Required for storage of some proteases in both connective tissue and mucosal mast cells and for storage of granzyme B in T-lymphocytes. Plays a role in localizing neutrophil elastase in azurophil granules of neutrophils. Mediates processing of MMP2. Plays a role in cytotoxic cell granule-mediated apoptosis by forming a complex with granzyme B which is delivered to cells by perforin to induce apoptosis. Regulates the secretion of TNF-alpha and may also regulate protease secretion. Inhibits bone mineralization. This chain is Serglycin (SRGN), found in Homo sapiens (Human).